A 291-amino-acid chain; its full sequence is Formamidopyrimidine-DNA glycosylase (291 aa).

The active-site Schiff-base intermediate with DNA is proline 2. Glutamate 3 acts as the Proton donor in catalysis. Lysine 58 acts as the Proton donor; for beta-elimination activity in catalysis. 3 residues coordinate DNA: histidine 100, arginine 123, and lysine 166. An FPG-type zinc finger spans residues 257-291; sequence SVYGREGKECSRCGMHIVRIVQSGRSSFYCPQCQK. Arginine 281 serves as the catalytic Proton donor; for delta-elimination activity.

Belongs to the FPG family. Monomer. Zn(2+) is required as a cofactor.

The enzyme catalyses Hydrolysis of DNA containing ring-opened 7-methylguanine residues, releasing 2,6-diamino-4-hydroxy-5-(N-methyl)formamidopyrimidine.. The catalysed reaction is 2'-deoxyribonucleotide-(2'-deoxyribose 5'-phosphate)-2'-deoxyribonucleotide-DNA = a 3'-end 2'-deoxyribonucleotide-(2,3-dehydro-2,3-deoxyribose 5'-phosphate)-DNA + a 5'-end 5'-phospho-2'-deoxyribonucleoside-DNA + H(+). Its function is as follows. Involved in base excision repair of DNA damaged by oxidation or by mutagenic agents. Acts as a DNA glycosylase that recognizes and removes damaged bases. Has a preference for oxidized purines, such as 7,8-dihydro-8-oxoguanine (8-oxoG). Has AP (apurinic/apyrimidinic) lyase activity and introduces nicks in the DNA strand. Cleaves the DNA backbone by beta-delta elimination to generate a single-strand break at the site of the removed base with both 3'- and 5'-phosphates. The chain is Formamidopyrimidine-DNA glycosylase from Bartonella bacilliformis (strain ATCC 35685 / KC583 / Herrer 020/F12,63).